A 307-amino-acid chain; its full sequence is N-acetylmuramic acid 6-phosphate etherase (307 aa).

Positions 57 to 220 (IIEAFKTNGR…TTASMIGVGK (164 aa)) constitute an SIS domain. Catalysis depends on Glu85, which acts as the Proton donor. The active site involves Glu116.

Belongs to the GCKR-like family. MurNAc-6-P etherase subfamily. As to quaternary structure, homodimer.

The catalysed reaction is N-acetyl-D-muramate 6-phosphate + H2O = N-acetyl-D-glucosamine 6-phosphate + (R)-lactate. The protein operates within amino-sugar metabolism; N-acetylmuramate degradation. Specifically catalyzes the cleavage of the D-lactyl ether substituent of MurNAc 6-phosphate, producing GlcNAc 6-phosphate and D-lactate. This chain is N-acetylmuramic acid 6-phosphate etherase, found in Alkaliphilus metalliredigens (strain QYMF).